The primary structure comprises 278 residues: 4-diphosphocytidyl-2-C-methyl-D-erythritol kinase (278 aa).

The active site involves Lys-9. Pro-93–Ser-103 lines the ATP pocket. The active site involves Asp-135.

This sequence belongs to the GHMP kinase family. IspE subfamily.

It carries out the reaction 4-CDP-2-C-methyl-D-erythritol + ATP = 4-CDP-2-C-methyl-D-erythritol 2-phosphate + ADP + H(+). Its pathway is isoprenoid biosynthesis; isopentenyl diphosphate biosynthesis via DXP pathway; isopentenyl diphosphate from 1-deoxy-D-xylulose 5-phosphate: step 3/6. Functionally, catalyzes the phosphorylation of the position 2 hydroxy group of 4-diphosphocytidyl-2C-methyl-D-erythritol. This is 4-diphosphocytidyl-2-C-methyl-D-erythritol kinase from Nitrosomonas eutropha (strain DSM 101675 / C91 / Nm57).